A 206-amino-acid polypeptide reads, in one-letter code: MIGKLKGTLDEIDEDHCLVDIHGVGYVAYCSARTLAALPSPGEAVVLFIETYVREDMLRLYGFQSALEREWFRLLLNNVPGVGAKVALAILSTLAPADLANAIALRDIAMVSRAPGVGKKVAERIVTELKNKAPAYAGAASGTIGLKQELGEGVAPAPITDAVSALVNLGYSRDTAANAVAAALKTAGEDADASKLIRFGLKELAR.

The domain I stretch occupies residues Met-1 to Gln-64. A domain II region spans residues Ser-65 to Ile-144. The flexible linker stretch occupies residues Gly-145–Val-154. The domain III stretch occupies residues Val-154–Arg-206.

Belongs to the RuvA family. As to quaternary structure, homotetramer. Forms an RuvA(8)-RuvB(12)-Holliday junction (HJ) complex. HJ DNA is sandwiched between 2 RuvA tetramers; dsDNA enters through RuvA and exits via RuvB. An RuvB hexamer assembles on each DNA strand where it exits the tetramer. Each RuvB hexamer is contacted by two RuvA subunits (via domain III) on 2 adjacent RuvB subunits; this complex drives branch migration. In the full resolvosome a probable DNA-RuvA(4)-RuvB(12)-RuvC(2) complex forms which resolves the HJ.

The protein localises to the cytoplasm. Its function is as follows. The RuvA-RuvB-RuvC complex processes Holliday junction (HJ) DNA during genetic recombination and DNA repair, while the RuvA-RuvB complex plays an important role in the rescue of blocked DNA replication forks via replication fork reversal (RFR). RuvA specifically binds to HJ cruciform DNA, conferring on it an open structure. The RuvB hexamer acts as an ATP-dependent pump, pulling dsDNA into and through the RuvAB complex. HJ branch migration allows RuvC to scan DNA until it finds its consensus sequence, where it cleaves and resolves the cruciform DNA. The sequence is that of Holliday junction branch migration complex subunit RuvA from Mesorhizobium japonicum (strain LMG 29417 / CECT 9101 / MAFF 303099) (Mesorhizobium loti (strain MAFF 303099)).